The sequence spans 281 residues: Arylamine N-acetyltransferase (281 aa).

Cys69 (acyl-thioester intermediate) is an active-site residue. Residues His107 and Asp122 contribute to the active site. Lys214 and Lys281 each carry N6-acetyllysine.

It belongs to the arylamine N-acetyltransferase family. Homodimer. In terms of processing, acetylated on Lys-214 and Lys-281. Deacetylated by CobB.

The protein resides in the cytoplasm. The enzyme catalyses an arylamine + acetyl-CoA = an N-acetylarylamine + CoA. The catalysed reaction is an N-hydroxyarylamine + acetyl-CoA = an N-acetoxyarylamine + CoA. With respect to regulation, inhibited by salicylic acid, acetylsalicylic acid, 2,6-dichrolo-4-nitrophenol, N-ethylmaleimide and iodoacetamide. In terms of biological role, catalyzes the acetyl-CoA-dependent N-acetylation of aromatic amines, and, probably, the O-acetylation of N-hydroxyarylamines. In vitro, catalyzes the N-acetylation of various arylamines such as aminobenzoic acid, aminophenol, aminotoluene, phenetidine, anisidine, aniline, isoniazid and 2-amino-fluorene. N-hydroxyarylamine O-acetyltransferase activity has not been assayed directly, however, NhoA activity is required for the mutagenicity of nitroaromatic compounds, suggesting that it also has O-acetyltransferase activity. This Escherichia coli (strain K12) protein is Arylamine N-acetyltransferase (nhoA).